The sequence spans 35 residues: Thrombin-like enzyme cerastobin (35 aa).

The region spanning V1 to L35 is the Peptidase S1 domain.

It belongs to the peptidase S1 family. Snake venom subfamily. As to quaternary structure, monomer. In terms of tissue distribution, expressed by the venom gland.

The protein resides in the secreted. Inhibited by diisopropylfluorophosphate (DFP). In terms of biological role, thrombin-like snake venom serine protease, that cleaves both alpha-chain (FGA) and beta-chain (FGB) of fibrinogen. Partially degrades factor X (F10), and release bradykinin from kininogen (KNG). Potently induces platelet aggregation. Shows a proteolytic activity towards protein constituents of the platelets cytoskeleton. Hydrolyzes actin, actin-binding protein, and P235. Shows a preferential cleavage at Arg-|-Xaa bonds. The chain is Thrombin-like enzyme cerastobin from Cerastes vipera (Sahara sand viper).